The sequence spans 442 residues: tRNA modification GTPase MnmE (442 aa).

Arg22, Glu79, and Lys119 together coordinate (6S)-5-formyl-5,6,7,8-tetrahydrofolate. The TrmE-type G domain maps to 216-366 (GIKTCLVGAP…LLEKIKSIFA (151 aa)). Position 226 (Asn226) interacts with K(+). GTP contacts are provided by residues 226–231 (NSGKSS), 245–251 (SEIPGTT), and 270–273 (DTAG). Ser230 is a binding site for Mg(2+). The K(+) site is built by Ser245, Ile247, and Thr250. Thr251 serves as a coordination point for Mg(2+). Lys442 contributes to the (6S)-5-formyl-5,6,7,8-tetrahydrofolate binding site.

It belongs to the TRAFAC class TrmE-Era-EngA-EngB-Septin-like GTPase superfamily. TrmE GTPase family. As to quaternary structure, homodimer. Heterotetramer of two MnmE and two MnmG subunits. K(+) serves as cofactor.

The protein localises to the cytoplasm. Exhibits a very high intrinsic GTPase hydrolysis rate. Involved in the addition of a carboxymethylaminomethyl (cmnm) group at the wobble position (U34) of certain tRNAs, forming tRNA-cmnm(5)s(2)U34. The sequence is that of tRNA modification GTPase MnmE from Mesomycoplasma hyopneumoniae (strain J / ATCC 25934 / NCTC 10110) (Mycoplasma hyopneumoniae).